A 185-amino-acid polypeptide reads, in one-letter code: uncharacterized protein (185 aa).

A signal peptide spans 1 to 24 (MPCNRAVFGAFVLALLISLQSVYF). Residues 50-70 (VAVNVIVEFSFDILFFLCGLL) form a helical membrane-spanning segment. Residues 96–113 (ELEHVSSRRRNDSRDDST) show a composition bias toward basic and acidic residues. The disordered stretch occupies residues 96-185 (ELEHVSSRRR…LFTAGGIGLP (90 aa)). Residues 114–126 (VRNVSKTSPLASQ) show a composition bias toward polar residues. Residues 127–138 (RSRDHFDGDPRE) are compositionally biased toward basic and acidic residues. Residues 139–155 (PAPPAYSPADFYPPPAS) show a composition bias toward pro residues.

It is found in the host membrane. This is an uncharacterized protein from Colorado tick fever virus (strain USA/Florio N-7180) (CTFV).